The chain runs to 330 residues: Adenylate isopentenyltransferase 8, chloroplastic (330 aa).

Residues 1–35 constitute a chloroplast transit peptide; it reads MQNLTSTFVSPSMIPITSPRLRLPPPRSVVPMTTV. Position 50–57 (50–57) interacts with ATP; the sequence is GATGSGKS.

Belongs to the IPP transferase family. Expressed in roots and in immature seeds with highest expression in the chalazal endosperm.

Its subcellular location is the plastid. The protein localises to the chloroplast. It catalyses the reaction dimethylallyl diphosphate + ADP = N(6)-(dimethylallyl)adenosine 5'-diphosphate + diphosphate. The enzyme catalyses dimethylallyl diphosphate + ATP = N(6)-(dimethylallyl)adenosine 5'-triphosphate + diphosphate. In terms of biological role, involved in cytokinin biosynthesis. Catalyzes the transfer of an isopentenyl group from dimethylallyl diphosphate (DMAPP) to ATP and ADP. The protein is Adenylate isopentenyltransferase 8, chloroplastic (IPT8) of Arabidopsis thaliana (Mouse-ear cress).